The sequence spans 215 residues: Ribonuclease (215 aa).

The first 22 residues, 1–22 (MKKIVVLLGMLLAPWFSSAVQA), serve as a signal peptide directing secretion. Active-site residues include H62, E102, and H106. Positions 144–166 (KPLPAQGGSGQCQRLAGPGQHHG) are disordered.

The protein belongs to the RNase T2 family.

The protein localises to the periplasm. It is found in the cytoplasm. Its function is as follows. One of the few RNases that cleave the phosphodiester bond between any two nucleotide. Shows a preference for adenylic acid. The protein is Ribonuclease of Aeromonas hydrophila.